The sequence spans 267 residues: Protein LicA (267 aa).

This sequence belongs to the peptidase S49 family.

In terms of biological role, mediates phase variation of the LPS epitopes. Phase variation of H.influenza LPS epitopes expressed by LicA is determined by a translational switch. This is Protein LicA (licA) from Haemophilus influenzae (strain ATCC 51907 / DSM 11121 / KW20 / Rd).